Consider the following 545-residue polypeptide: Purple acid phosphatase 13 (545 aa).

The first 25 residues, 1–25, serve as a signal peptide directing secretion; the sequence is MVVKYTMSMSFFVIFASTVTIIVHG. 2 N-linked (GlcNAc...) asparagine glycosylation sites follow: Asn-125 and Asn-145. Residue Asp-203 coordinates Fe cation. Asn-209 is a glycosylation site (N-linked (GlcNAc...) asparagine). Fe cation is bound at residue Tyr-233. N-linked (GlcNAc...) asparagine glycosylation is found at Asn-240, Asn-254, Asn-306, Asn-321, Asn-351, and Asn-367. Catalysis depends on His-389, which acts as the Proton donor. Position 416 (His-416) interacts with Zn(2+). 416-418 contacts substrate; that stretch reads HVD. Residues Asn-428, Asn-466, Asn-475, and Asn-510 are each glycosylated (N-linked (GlcNAc...) asparagine).

The protein belongs to the metallophosphoesterase superfamily. Purple acid phosphatase family. As to quaternary structure, homodimer. It depends on Fe cation as a cofactor. The cofactor is Zn(2+). As to expression, expressed in stems, leaves, flowers and siliques.

Its subcellular location is the secreted. It carries out the reaction a phosphate monoester + H2O = an alcohol + phosphate. In Arabidopsis thaliana (Mouse-ear cress), this protein is Purple acid phosphatase 13 (PAP13).